We begin with the raw amino-acid sequence, 540 residues long: Chaperonin GroEL (540 aa).

ATP contacts are provided by residues 30 to 33 (TLGP), Lys51, 87 to 91 (DGTTT), Gly415, 479 to 481 (NAA), and Asp495.

This sequence belongs to the chaperonin (HSP60) family. In terms of assembly, forms a cylinder of 14 subunits composed of two heptameric rings stacked back-to-back. Interacts with the co-chaperonin GroES.

It localises to the cytoplasm. It catalyses the reaction ATP + H2O + a folded polypeptide = ADP + phosphate + an unfolded polypeptide.. In terms of biological role, together with its co-chaperonin GroES, plays an essential role in assisting protein folding. The GroEL-GroES system forms a nano-cage that allows encapsulation of the non-native substrate proteins and provides a physical environment optimized to promote and accelerate protein folding. This chain is Chaperonin GroEL, found in Raoultella ornithinolytica (Klebsiella ornithinolytica).